The following is a 209-amino-acid chain: UPF0174 protein HP_1587 (209 aa).

This sequence belongs to the UPF0174 family.

The polypeptide is UPF0174 protein HP_1587 (Helicobacter pylori (strain ATCC 700392 / 26695) (Campylobacter pylori)).